The sequence spans 206 residues: Probable peptidyl-tRNA hydrolase (206 aa).

The Proton acceptor role is filled by H48. TRNA contacts are provided by Y83, N85, and N137.

It belongs to the PTH family.

The protein resides in the mitochondrion. It catalyses the reaction an N-acyl-L-alpha-aminoacyl-tRNA + H2O = an N-acyl-L-amino acid + a tRNA + H(+). Functionally, peptidyl-tRNA hydrolase involved in the recycling of tRNA-Lys from diacetyl-lysyl-tRNA-Lys and is important for mitochondrial function. The chain is Probable peptidyl-tRNA hydrolase (pth1) from Schizosaccharomyces pombe (strain 972 / ATCC 24843) (Fission yeast).